The sequence spans 107 residues: Thioredoxin (107 aa).

The 106-residue stretch at 2 to 107 folds into the Thioredoxin domain; the sequence is AGVLKNVTDD…ALLRPGPVPR (106 aa). A disulfide bond links cysteine 33 and cysteine 36.

The protein belongs to the thioredoxin family.

Component of the thioredoxin-thioredoxin reductase system. Participates in various redox reactions through the reversible oxidation of its active center dithiol to a disulfide and catalyzes dithiol-disulfide exchange reactions. The chain is Thioredoxin (trxA) from Streptomyces clavuligerus.